A 952-amino-acid polypeptide reads, in one-letter code: Plasma membrane ATPase 4 (952 aa).

Topologically, residues 1–64 (MAKAISLEEI…EKNESKILKF (64 aa)) are cytoplasmic. A helical transmembrane segment spans residues 65–84 (LGFMWNPLSWVMEAAAVMAI). Topologically, residues 85–96 (ALANGDGKPPDW) are extracellular. The helical transmembrane segment at 97-117 (QDFIGIICLLVINSTISFIEE) threads the bilayer. Topologically, residues 118–246 (NNAGNAAAAL…GHFQKVLTAI (129 aa)) are cytoplasmic. A helical transmembrane segment spans residues 247-267 (GNFCICSIAIGMLVEIIVMYP). At 268–277 (IQHRKYRDGI) the chain is on the extracellular side. Residues 278-299 (DNLLVLLIGGIPIAMPTVLSVT) form a helical membrane-spanning segment. Residues 300–646 (MAIGSHRLSQ…TSRAIFQRMK (347 aa)) are Cytoplasmic-facing. The active-site 4-aspartylphosphate intermediate is the Asp332. Asp591 and Asp595 together coordinate Mg(2+). The chain crosses the membrane as a helical span at residues 647–668 (NYTIYAVSITIRIVFGFMFIAL). Over 669–673 (IWKYD) the chain is Extracellular. The helical transmembrane segment at 674-696 (FSAFMVLIIAILNDGTIMTISKD) threads the bilayer. Over 697–712 (RVKPSPMPDSWKLKEI) the chain is Cytoplasmic. Residues 713–733 (FATGVVLGGYQALMTVVFFWA) form a helical membrane-spanning segment. Residues 734–754 (MHDTDFFSDKFGVKSLRNSDE) are Extracellular-facing. A helical membrane pass occupies residues 755–775 (EMMSALYLQVSIISQALIFVT). Residues 776–787 (RSRSWSFLERPG) are Cytoplasmic-facing. A helical transmembrane segment spans residues 788–808 (MLLVIAFMIAQLVATLIAVYA). Over 809 to 817 (NWAFARVKG) the chain is Extracellular. The chain crosses the membrane as a helical span at residues 818 to 838 (CGWGWAGVIWLYSIIFYLPLD). Residues 839-952 (IMKFAIRYIL…IETIQQHYTV (114 aa)) lie on the Cytoplasmic side of the membrane.

The protein belongs to the cation transport ATPase (P-type) (TC 3.A.3) family. Type IIIA subfamily. In terms of tissue distribution, expressed at high levels in root, stem, leaf and flower.

It is found in the cell membrane. It carries out the reaction ATP + H2O + H(+)(in) = ADP + phosphate + 2 H(+)(out). Its function is as follows. The plasma membrane ATPase of plants and fungi is a hydrogen ion pump. The proton gradient it generates drives the active transport of nutrients by H(+)-symport. The resulting external acidification and/or internal alkinization may mediate growth responses. This chain is Plasma membrane ATPase 4 (PMA4), found in Nicotiana plumbaginifolia (Leadwort-leaved tobacco).